A 140-amino-acid polypeptide reads, in one-letter code: Transcription antitermination protein NusB (140 aa).

The protein belongs to the NusB family.

Functionally, involved in transcription antitermination. Required for transcription of ribosomal RNA (rRNA) genes. Binds specifically to the boxA antiterminator sequence of the ribosomal RNA (rrn) operons. The sequence is that of Transcription antitermination protein NusB from Myxococcus xanthus (strain DK1622).